A 310-amino-acid polypeptide reads, in one-letter code: tRNA pseudouridine synthase B (310 aa).

Residue Asp38 is the Nucleophile of the active site.

The protein belongs to the pseudouridine synthase TruB family. Type 1 subfamily.

The catalysed reaction is uridine(55) in tRNA = pseudouridine(55) in tRNA. Functionally, responsible for synthesis of pseudouridine from uracil-55 in the psi GC loop of transfer RNAs. The protein is tRNA pseudouridine synthase B of Geotalea uraniireducens (strain Rf4) (Geobacter uraniireducens).